Reading from the N-terminus, the 380-residue chain is Large ribosomal subunit protein mL38 (380 aa).

The N-terminal 26 residues, Met1–Ser26, are a transit peptide targeting the mitochondrion. Positions Ser98–Ala123 form a coiled coil.

The protein belongs to the phosphatidylethanolamine-binding protein family. Mitochondrion-specific ribosomal protein mL38 subfamily. In terms of assembly, component of the mitochondrial ribosome large subunit (39S) which comprises a 16S rRNA and about 50 distinct proteins.

It is found in the mitochondrion. The chain is Large ribosomal subunit protein mL38 (Mrpl38) from Rattus norvegicus (Rat).